Reading from the N-terminus, the 162-residue chain is Larval cuticle protein F1 (162 aa).

4 tandem repeats follow at residues 27 to 30 (AAPV), 43 to 46 (AAPV), 59 to 62 (AAPV), and 75 to 78 (AAPA).

Its function is as follows. Component of the larval cuticle. In Tenebrio molitor (Yellow mealworm beetle), this protein is Larval cuticle protein F1.